The chain runs to 312 residues: MAKKTMGIHHITAIVGHPQENTDFYAGVLGLRLVKQTVNFDDPGTYHLYFGNEGGKPGTIITFFPWAGARQGVIGDGQVGVTSYVVPKGAMAFWEKRLEKFNVPYTKIERFGEQYVEFDDPHGLHLEIVEREEGEANTWTFGEVTPDVAIKGFGGATLLSEQPDKTADLLENIMGLERVGKEGDFVRYRSAGDIGNVIDLKLTPIGRGQMGAGTVHHIAWRANDDEDQLDWQRYIASHGYGVTPVRDRNYFNAIYFREHGEILFEIATDPPGFAHDETQETMGEKLMLPVQYEPHRTQIEQGLLPFEVRELD.

VOC domains are found at residues 7 to 131 and 152 to 269; these read GIHH…IVER and GFGG…IATD. Fe cation contacts are provided by histidine 10, histidine 217, and glutamate 265.

The protein belongs to the extradiol ring-cleavage dioxygenase family. Requires Fe(2+) as cofactor.

It localises to the cytoplasm. In terms of biological role, putative ring-cleavage dioxygenase that may contribute to the degradation of aromatic compounds. The chain is Putative ring-cleaving dioxygenase MhqO (mhqO) from Bacillus subtilis (strain 168).